An 87-amino-acid chain; its full sequence is Translation initiation factor IF-1 2 (87 aa).

An S1-like domain is found at 1–72; the sequence is MAKEELIELN…TKGRINFRHK (72 aa). The segment at 66–87 is disordered; that stretch reads RINFRHKDERSGPPSRPPQHRR.

It belongs to the IF-1 family. In terms of assembly, component of the 30S ribosomal translation pre-initiation complex which assembles on the 30S ribosome in the order IF-2 and IF-3, IF-1 and N-formylmethionyl-tRNA(fMet); mRNA recruitment can occur at any time during PIC assembly.

The protein resides in the cytoplasm. One of the essential components for the initiation of protein synthesis. Stabilizes the binding of IF-2 and IF-3 on the 30S subunit to which N-formylmethionyl-tRNA(fMet) subsequently binds. Helps modulate mRNA selection, yielding the 30S pre-initiation complex (PIC). Upon addition of the 50S ribosomal subunit IF-1, IF-2 and IF-3 are released leaving the mature 70S translation initiation complex. The sequence is that of Translation initiation factor IF-1 2 from Bordetella parapertussis (strain 12822 / ATCC BAA-587 / NCTC 13253).